Here is a 672-residue protein sequence, read N- to C-terminus: Glycerophosphocholine phosphodiesterase GPCPD1 (672 aa).

One can recognise a CBM20 domain in the interval 1–115 (MTPSQVAFEI…IIIDDGQFGI (115 aa)). Substrate-binding positions include Lys-70 and 88-89 (HK). Phosphoserine occurs at positions 175 and 424. One can recognise a GP-PDE domain in the interval 318 to 618 (PLDVGHRGAG…DRIYDWMPEQ (301 aa)). Residue Tyr-608 is modified to Phosphotyrosine.

Belongs to the glycerophosphoryl diester phosphodiesterase family. As to expression, widely expressed, with highest expression in spinal chord.

It localises to the cytoplasm. The protein localises to the cytosol. It carries out the reaction sn-glycerol 3-phosphocholine + H2O = sn-glycerol 3-phosphate + choline + H(+). May be involved in the negative regulation of skeletal muscle differentiation, independently of its glycerophosphocholine phosphodiesterase activity. The sequence is that of Glycerophosphocholine phosphodiesterase GPCPD1 (GPCPD1) from Homo sapiens (Human).